The following is a 211-amino-acid chain: Small ribosomal subunit protein eS1 (211 aa).

Belongs to the eukaryotic ribosomal protein eS1 family.

This chain is Small ribosomal subunit protein eS1, found in Archaeoglobus fulgidus (strain ATCC 49558 / DSM 4304 / JCM 9628 / NBRC 100126 / VC-16).